The following is a 179-amino-acid chain: ATP-dependent protease subunit HslV (179 aa).

Threonine 8 is a catalytic residue. 3 residues coordinate Na(+): serine 164, cysteine 167, and threonine 170.

This sequence belongs to the peptidase T1B family. HslV subfamily. In terms of assembly, a double ring-shaped homohexamer of HslV is capped on each side by a ring-shaped HslU homohexamer. The assembly of the HslU/HslV complex is dependent on binding of ATP.

It localises to the cytoplasm. The catalysed reaction is ATP-dependent cleavage of peptide bonds with broad specificity.. With respect to regulation, allosterically activated by HslU binding. Protease subunit of a proteasome-like degradation complex believed to be a general protein degrading machinery. This Staphylococcus carnosus (strain TM300) protein is ATP-dependent protease subunit HslV.